The primary structure comprises 211 residues: Glial cell line-derived neurotrophic factor (211 aa).

The N-terminal stretch at 1-19 is a signal peptide; it reads MKLWDVVAVCLVLLHTASA. A propeptide spanning residues 20-75 is cleaved from the precursor; it reads FPLPAGKRLLEAPAEDHSLGHRRVPFALTSDSNMPEDYPDQFDDVMDFIQATIKRL. The disordered stretch occupies residues 76 to 113; it reads KRSPDKQAAALPRRERNRQAAAASPENSRGKGRRGQRG. 3 disulfide bridges follow: Cys-118-Cys-179, Cys-145-Cys-208, and Cys-149-Cys-210. N-linked (GlcNAc...) asparagine glycans are attached at residues Asn-126 and Asn-162.

Belongs to the TGF-beta family. GDNF subfamily. In terms of assembly, homodimer; disulfide-linked. Interacts with GFRA1 coreceptor and RET: forms a 2:2:2 ternary complex composed of GDNF ligand, GFRA1 and RET receptor. Interacts (via propeptide) with SORL1 (via N-terminal ectodomain); this interaction affects GDNF-regulated, but not constitutive secretion. Also interacts with SORL1 in complex with GFRA1; this interaction leads to GDNF endocytosis and lysosomal degradation. In terms of tissue distribution, expressed in both the central nervous system (CNS) and in non-CNS tissues, including the kidney, lung, bone, heart, liver, spleen, sciatic nerve and blood. Expressed in brain (at protein level). Localizes at the proximal ligature of the hypoglossal nerve.

The protein localises to the secreted. Functionally, neurotrophic factor that enhances survival and morphological differentiation of dopaminergic neurons and increases their high-affinity dopamine uptake. Acts by binding to its coreceptor, GFRA1, leading to autophosphorylation and activation of the RET receptor. May also modulate local neuronal effects in distal regions of the motor neuron. Involved in the development of the neural crest. The sequence is that of Glial cell line-derived neurotrophic factor (Gdnf) from Rattus norvegicus (Rat).